Reading from the N-terminus, the 197-residue chain is uncharacterized protein (197 aa).

Residues 168 to 185 (QRDDFSEDSHANDPKLVG) are compositionally biased toward basic and acidic residues. The interval 168-197 (QRDDFSEDSHANDPKLVGDDYVPQAPEQIN) is disordered.

This is an uncharacterized protein from Escherichia coli (strain K12).